Reading from the N-terminus, the 336-residue chain is Protein-glutamate methylesterase/protein-glutamine glutaminase 1 (336 aa).

The region spanning K2–L119 is the Response regulatory domain. At D53 the chain carries 4-aspartylphosphate. A CheB-type methylesterase domain is found at P143 to K336. Catalysis depends on residues S159, H186, and D279.

It belongs to the CheB family. Post-translationally, phosphorylated by CheA. Phosphorylation of the N-terminal regulatory domain activates the methylesterase activity.

It localises to the cytoplasm. It catalyses the reaction [protein]-L-glutamate 5-O-methyl ester + H2O = L-glutamyl-[protein] + methanol + H(+). The catalysed reaction is L-glutaminyl-[protein] + H2O = L-glutamyl-[protein] + NH4(+). Involved in chemotaxis. Part of a chemotaxis signal transduction system that modulates chemotaxis in response to various stimuli. Catalyzes the demethylation of specific methylglutamate residues introduced into the chemoreceptors (methyl-accepting chemotaxis proteins or MCP) by CheR. Also mediates the irreversible deamidation of specific glutamine residues to glutamic acid. This chain is Protein-glutamate methylesterase/protein-glutamine glutaminase 1, found in Pseudomonas fluorescens (strain ATCC BAA-477 / NRRL B-23932 / Pf-5).